The sequence spans 44 residues: Photosystem II reaction center protein K (44 aa).

The propeptide occupies 1–7; it reads METLLLS. Residues 23–43 form a helical membrane-spanning segment; it reads LPIIPVFFLLLAFVWQAAIGF.

It belongs to the PsbK family. In terms of assembly, PSII is composed of 1 copy each of membrane proteins PsbA, PsbB, PsbC, PsbD, PsbE, PsbF, PsbH, PsbI, PsbJ, PsbK, PsbL, PsbM, PsbT, PsbX, PsbY, PsbZ, Psb30/Ycf12, at least 3 peripheral proteins of the oxygen-evolving complex and a large number of cofactors. It forms dimeric complexes.

It is found in the plastid. Its subcellular location is the chloroplast thylakoid membrane. In terms of biological role, one of the components of the core complex of photosystem II (PSII). PSII is a light-driven water:plastoquinone oxidoreductase that uses light energy to abstract electrons from H(2)O, generating O(2) and a proton gradient subsequently used for ATP formation. It consists of a core antenna complex that captures photons, and an electron transfer chain that converts photonic excitation into a charge separation. The polypeptide is Photosystem II reaction center protein K (Phaeodactylum tricornutum (strain CCAP 1055/1)).